The sequence spans 317 residues: Transaldolase (317 aa).

Residue Lys132 is the Schiff-base intermediate with substrate of the active site.

Belongs to the transaldolase family. Type 1 subfamily. As to quaternary structure, homodimer.

The protein localises to the cytoplasm. The catalysed reaction is D-sedoheptulose 7-phosphate + D-glyceraldehyde 3-phosphate = D-erythrose 4-phosphate + beta-D-fructose 6-phosphate. It functions in the pathway carbohydrate degradation; pentose phosphate pathway; D-glyceraldehyde 3-phosphate and beta-D-fructose 6-phosphate from D-ribose 5-phosphate and D-xylulose 5-phosphate (non-oxidative stage): step 2/3. Transaldolase is important for the balance of metabolites in the pentose-phosphate pathway. This chain is Transaldolase, found in Haemophilus influenzae (strain PittGG).